Consider the following 86-residue polypeptide: DNA-directed RNA polymerase subunit omega (86 aa).

The protein belongs to the RNA polymerase subunit omega family. As to quaternary structure, the RNAP catalytic core consists of 2 alpha, 1 beta, 1 beta' and 1 omega subunit. When a sigma factor is associated with the core the holoenzyme is formed, which can initiate transcription.

It carries out the reaction RNA(n) + a ribonucleoside 5'-triphosphate = RNA(n+1) + diphosphate. Promotes RNA polymerase assembly. Latches the N- and C-terminal regions of the beta' subunit thereby facilitating its interaction with the beta and alpha subunits. The sequence is that of DNA-directed RNA polymerase subunit omega from Psychrobacter sp. (strain PRwf-1).